Consider the following 504-residue polypeptide: Syntaphilin (504 aa).

Residues 1–74 (MAMSLQGSRR…HGIKPPTPEQ (74 aa)) form a disordered region. 2 stretches are compositionally biased toward low complexity: residues 7–26 (GSRR…VSVR) and 33–49 (SLSS…SDSS). A coiled-coil region spans residues 79–161 (LQQKEVCIRH…VKNNLIDKDK (83 aa)). The interval 191 to 244 (VAKEEGTGESAGGSPARSLTRSSTYTKLSDPAVCGDRQAGDPSNTPAEDRADSG) is disordered. Phosphoserine is present on residues Ser200 and Ser204. The span at 207 to 217 (RSLTRSSTYTK) shows a compositional bias: polar residues. Phosphothreonine is present on Thr214. A Phosphoserine modification is found at Ser219. Thr235 carries the post-translational modification Phosphothreonine. Residues 437–456 (YIVDLLAVVVPAVPTVAWLC) traverse the membrane as a helical segment.

In terms of assembly, binds to STX1A. Interacts with DNM1; this interaction inhibits the binding of DNM1 to AMPH and DNM1-receptor-mediated endocytosis.

It localises to the membrane. The protein localises to the synapse. It is found in the synaptosome. Inhibits SNARE complex formation by absorbing free STX1A. The sequence is that of Syntaphilin from Rattus norvegicus (Rat).